The chain runs to 155 residues: UPF0178 protein ACIAD2644 (155 aa).

The interval 120 to 155 (GAGVQTGGPPPISERDKREFSSALDQTILKQKRKTA) is disordered.

This sequence belongs to the UPF0178 family.

The sequence is that of UPF0178 protein ACIAD2644 from Acinetobacter baylyi (strain ATCC 33305 / BD413 / ADP1).